Here is a 585-residue protein sequence, read N- to C-terminus: Probable G-protein coupled receptor Mth-like 10 (585 aa).

The first 32 residues, Met1–Gly32, serve as a signal peptide directing secretion. Residues Ile33–Ser250 lie on the Extracellular side of the membrane. Disulfide bonds link Cys56/Cys110, Cys112/Cys117, Cys121/Cys216, Cys122/Cys135, and Cys177/Cys236. Asn63 and Asn72 each carry an N-linked (GlcNAc...) asparagine glycan. Asn142, Asn152, Asn157, Asn198, and Asn223 each carry an N-linked (GlcNAc...) asparagine glycan. Residues Tyr251 to Pro271 form a helical membrane-spanning segment. The Cytoplasmic portion of the chain corresponds to Glu272–Ser280. The helical transmembrane segment at Leu281–Tyr301 threads the bilayer. Residues Gln302–Val312 are Extracellular-facing. Residues Phe313–Phe333 traverse the membrane as a helical segment. The Cytoplasmic portion of the chain corresponds to Asp334–Arg353. A helical membrane pass occupies residues Phe354–Cys374. At Ala375–Ala404 the chain is on the extracellular side. A helical transmembrane segment spans residues Met405 to Met425. Topologically, residues Thr426–Arg466 are cytoplasmic. A helical membrane pass occupies residues Phe467–Ser487. At Tyr488 to Lys498 the chain is on the extracellular side. The chain crosses the membrane as a helical span at residues Leu499–Val519. The Cytoplasmic segment spans residues Met520–Arg585.

Belongs to the G-protein coupled receptor 2 family. Mth subfamily.

The protein resides in the cell membrane. This is Probable G-protein coupled receptor Mth-like 10 (mthl10) from Drosophila melanogaster (Fruit fly).